We begin with the raw amino-acid sequence, 688 residues long: T-box transcription factor TBX2-A (688 aa).

Residues 104–277 (LWDQFHKIGT…NNPFAKGFRD (174 aa)) constitute a DNA-binding region (T-box). 2 disordered regions span residues 301–436 (CKAD…GSLS) and 606–688 (PSTN…ETPK). 3 stretches are compositionally biased toward basic and acidic residues: residues 340 to 361 (NNREEKFGADSDQELDRREIRS), 378 to 403 (RLEDRGKDKSTPEKKSDSPESRKDGS), and 412 to 430 (SLEKDKAESRRKEDSKSDP). The span at 621 to 636 (PGSESSKPGSSRESSP) shows a compositional bias: low complexity. Positions 655–679 (ASMKDSINELQNIQRLVSGLESQRE) form a coiled coil. The segment covering 676–688 (SQREISPGRETPK) has biased composition (basic and acidic residues).

In terms of assembly, binds DNA as a monomer.

The protein resides in the nucleus. Transcription factor which acts as a transcriptional repressor. May also function as a transcriptional activator. Binds to the palindromic T site 5'-TTCACACCTAGGTGTGAA-3' DNA sequence, or a half-site, which are present in the regulatory region of several genes. This is T-box transcription factor TBX2-A (tbx2-a) from Xenopus laevis (African clawed frog).